A 146-amino-acid polypeptide reads, in one-letter code: Cystatin-C (146 aa).

The N-terminal stretch at 1-26 is a signal peptide; that stretch reads MAGPLRAPLLLLAILAVALAVSPAAG. S43 bears the Phosphoserine mark. Residues 81–85 carry the Secondary area of contact motif; it reads QIVAG. 2 disulfides stabilise this stretch: C99-C109 and C123-C143.

It belongs to the cystatin family.

It is found in the secreted. Functionally, as an inhibitor of cysteine proteinases, this protein is thought to serve an important physiological role as a local regulator of this enzyme activity. This Macaca mulatta (Rhesus macaque) protein is Cystatin-C (CST3).